Here is a 280-residue protein sequence, read N- to C-terminus: Gastrula zinc finger protein XlCGF46.1 (280 aa).

10 consecutive C2H2-type zinc fingers follow at residues 6–28, 34–56, 62–84, 90–112, 118–140, 146–168, 174–196, 202–224, 230–252, and 258–280; these read FACK…KLMH, FECT…QLIH, FVCP…LLCH, FTCK…KLTH, FICS…QLIH, YVCT…LRTH, FKCE…KVTH, FTCE…QLTH, FKCE…QRFH, and YKCN…ELSH.

It belongs to the krueppel C2H2-type zinc-finger protein family.

Its subcellular location is the nucleus. In terms of biological role, may be involved in transcriptional regulation. The protein is Gastrula zinc finger protein XlCGF46.1 of Xenopus laevis (African clawed frog).